A 617-amino-acid chain; its full sequence is Vitamin B12 transporter BtuB (617 aa).

The N-terminal stretch at 1 to 22 (MRKTFLAITCASLLSPTFYSQA) is a signal peptide. The short motif at 29–36 (ETVVVTAN) is the TonB box element. The 115-residue stretch at 40-154 (QIDGAVLAQT…ISGVINIITR (115 aa)) folds into the TBDR plug domain. The TBDR beta-barrel domain maps to 159-617 (DDSGRVSAGY…QYFVSADYRF (459 aa)). Positions 600-617 (VGYVTPGRQYFVSADYRF) match the TonB C-terminal box motif.

The protein belongs to the TonB-dependent receptor family. BtuB (TC 1.B.14.3.1) subfamily.

Its subcellular location is the cell outer membrane. Involved in the active translocation of vitamin B12 (cyanocobalamin) across the outer membrane to the periplasmic space. It derives its energy for transport by interacting with the trans-periplasmic membrane protein TonB. The protein is Vitamin B12 transporter BtuB of Vibrio campbellii (strain ATCC BAA-1116).